The sequence spans 347 residues: E3 ubiquitin-protein ligase ARK2C (347 aa).

Disordered regions lie at residues 23-79 and 268-289; these read PFQR…GTLH and PHKYKKRRPQDSKGKKDEGEES. The ubiquitin binding stretch occupies residues 267–269; it reads FPH. Residues 276–285 show a composition bias toward basic and acidic residues; sequence PQDSKGKKDE. Zn(2+)-binding residues include cysteine 295 and cysteine 298. The segment at 295–336 adopts an RING-type; atypical zinc-finger fold; that stretch reads CTICLSMLEDGEDVRRLPCMHLFHQLCVDQWLAMSKKCPICR. Residues 310 to 314 are ubiquitin binding; that stretch reads RLPCM. Histidine 318 and cysteine 321 together coordinate Zn(2+).

This sequence belongs to the Arkadia family. In terms of assembly, monomer; binding to the ubiquitin-conjugating enzyme E2 does not trigger homodimerization. Expressed in neurons of the nervous system.

The protein resides in the nucleus. The enzyme catalyses S-ubiquitinyl-[E2 ubiquitin-conjugating enzyme]-L-cysteine + [acceptor protein]-L-lysine = [E2 ubiquitin-conjugating enzyme]-L-cysteine + N(6)-ubiquitinyl-[acceptor protein]-L-lysine.. With respect to regulation, binds free ubiquitin non-covalently via its RING-type zinc finger. Ubiquitin-binding leads to enhance the E3 ubiquitin-protein ligase activity by stabilizing the ubiquitin-conjugating enzyme E2 (donor ubiquitin) in the 'closed' conformation and activating ubiquitin transfer. Its function is as follows. E3 ubiquitin-protein ligase that acts as a regulator of motor axon elongation. Required for efficient motor axon extension in the dorsal forelimb by enhancing the transcriptional responses of the SMAD1/SMAD5/SMAD8 effectors, which are activated downstream of BMP. Acts by mediating ubiquitination and degradation of SMAD inhibitors such as SMAD6, SMAD7, SKI and SNON isoform of SKIL. The chain is E3 ubiquitin-protein ligase ARK2C from Mus musculus (Mouse).